The sequence spans 201 residues: Holliday junction branch migration complex subunit RuvA (201 aa).

Residues 1–63 (MIAYIKGTLN…EDAQILFGFQ (63 aa)) form a domain I region. Residues 64 to 142 (NRDEKYLFTK…SVFSITDEQQ (79 aa)) are domain II. Residues 143 to 149 (KSSVSNV) are flexible linker. The segment at 150–201 (NNNEVYSEAMEALKALGYTDKEVKQVLPHLKKDNDALSVDEAIRKALALLAK) is domain III.

Belongs to the RuvA family. In terms of assembly, homotetramer. Forms an RuvA(8)-RuvB(12)-Holliday junction (HJ) complex. HJ DNA is sandwiched between 2 RuvA tetramers; dsDNA enters through RuvA and exits via RuvB. An RuvB hexamer assembles on each DNA strand where it exits the tetramer. Each RuvB hexamer is contacted by two RuvA subunits (via domain III) on 2 adjacent RuvB subunits; this complex drives branch migration. In the full resolvosome a probable DNA-RuvA(4)-RuvB(12)-RuvC(2) complex forms which resolves the HJ.

The protein localises to the cytoplasm. Functionally, the RuvA-RuvB-RuvC complex processes Holliday junction (HJ) DNA during genetic recombination and DNA repair, while the RuvA-RuvB complex plays an important role in the rescue of blocked DNA replication forks via replication fork reversal (RFR). RuvA specifically binds to HJ cruciform DNA, conferring on it an open structure. The RuvB hexamer acts as an ATP-dependent pump, pulling dsDNA into and through the RuvAB complex. HJ branch migration allows RuvC to scan DNA until it finds its consensus sequence, where it cleaves and resolves the cruciform DNA. In Oceanobacillus iheyensis (strain DSM 14371 / CIP 107618 / JCM 11309 / KCTC 3954 / HTE831), this protein is Holliday junction branch migration complex subunit RuvA.